Consider the following 282-residue polypeptide: NADPH-dependent 7-cyano-7-deazaguanine reductase (282 aa).

88–90 (IES) contributes to the substrate binding site. Residue 90–91 (SK) coordinates NADPH. The active-site Thioimide intermediate is C189. D196 acts as the Proton donor in catalysis. 228 to 229 (HE) lines the substrate pocket. Residue 257–258 (RG) coordinates NADPH.

Belongs to the GTP cyclohydrolase I family. QueF type 2 subfamily. Homodimer.

It is found in the cytoplasm. The enzyme catalyses 7-aminomethyl-7-carbaguanine + 2 NADP(+) = 7-cyano-7-deazaguanine + 2 NADPH + 3 H(+). Its pathway is tRNA modification; tRNA-queuosine biosynthesis. Its function is as follows. Catalyzes the NADPH-dependent reduction of 7-cyano-7-deazaguanine (preQ0) to 7-aminomethyl-7-deazaguanine (preQ1). In Photorhabdus laumondii subsp. laumondii (strain DSM 15139 / CIP 105565 / TT01) (Photorhabdus luminescens subsp. laumondii), this protein is NADPH-dependent 7-cyano-7-deazaguanine reductase.